The following is a 585-amino-acid chain: Arginine--tRNA ligase (585 aa).

Positions 131-141 (ANPTGPMHVGH) match the 'HIGH' region motif.

It belongs to the class-I aminoacyl-tRNA synthetase family. Monomer.

The protein localises to the cytoplasm. The enzyme catalyses tRNA(Arg) + L-arginine + ATP = L-arginyl-tRNA(Arg) + AMP + diphosphate. The chain is Arginine--tRNA ligase from Rhizobium etli (strain CIAT 652).